We begin with the raw amino-acid sequence, 389 residues long: Chalcone synthase 1 (389 aa).

Residue Cys164 is part of the active site.

This sequence belongs to the thiolase-like superfamily. Chalcone/stilbene synthases family.

The enzyme catalyses (E)-4-coumaroyl-CoA + 3 malonyl-CoA + 3 H(+) = 2',4,4',6'-tetrahydroxychalcone + 3 CO2 + 4 CoA. Its pathway is secondary metabolite biosynthesis; flavonoid biosynthesis. The primary product of this enzyme is 4,2',4',6'-tetrahydroxychalcone (also termed naringenin-chalcone or chalcone) which can under specific conditions spontaneously isomerize into naringenin. The protein is Chalcone synthase 1 (CHS1) of Medicago sativa (Alfalfa).